The chain runs to 36 residues: Photosystem I reaction center subunit VIII (36 aa).

Residues 9 to 29 traverse the membrane as a helical segment; the sequence is ISVPLVGLVFPAITMVLSFIY.

This sequence belongs to the PsaI family.

The protein resides in the plastid. Its subcellular location is the chloroplast thylakoid membrane. May help in the organization of the PsaL subunit. This Huperzia lucidula (Shining clubmoss) protein is Photosystem I reaction center subunit VIII.